Here is a 647-residue protein sequence, read N- to C-terminus: MESQLHELAEARWFLSKVQDDFRGGKINVEITHKLLEKLDFPCHFAHVKHIFKENDRQNQGRITIEEFRAIYRCIVHREEITEIFNTYTENRKILSENSLIEFLTQEQYEMEIDHSDSVEIINKYEPIEEVKGERQMSIEGFARYMFSSECLLFKENCKTVYQDMNHPLSDYFISSSHNTYLISDQILGPSDIWGYVSALVKGCRCLEIDCWDGSQNEPIVYHGYTFTSKLLFKTVVQAINKYAFVTSDYPVVLSLENHCSPGQQEVMASILQSTFGDFLLSDMLEEFPDTLPSPEALKFKILVKNRKVGTLSETHERIGTDKSGQVLEWKEVIYEDGDEDSGMDPETWDVFLSRIKEEREADPSTLSGIAGVKKRKRKMKIAMALSDLVIYTKAEKFRNFQYSRVYQQFNETNSIGESRARKLSKLRVHEFIFHTAAFITRVYPKMMRADSSNFNPQEFWNVGCQMVALNFQTPGLPMDLQNGKFLDNGGSGYILKPDILRDTTLGFNPNEPEYDDHPVTLTIRIISGIQLPVSSSSNTPDIVVIIEVYGVPNDHVKQQTRVVKNNAFSPKWNETFTFLIQVPELALIRFVVETQQGLLSGNELLGQYTLPVLCMNKGYRRVPLFSKSGANLEPSSLFIYVWYFRE.

An EF-hand domain is found at 43–78 (CHFAHVKHIFKENDRQNQGRITIEEFRAIYRCIVHR). Positions 163-307 (QDMNHPLSDY…LKFKILVKNR (145 aa)) constitute a PI-PLC X-box domain. Active-site residues include His-178 and His-223. The 117-residue stretch at 386 to 502 (LSDLVIYTKA…GYILKPDILR (117 aa)) folds into the PI-PLC Y-box domain. The 126-residue stretch at 502-627 (RDTTLGFNPN…KGYRRVPLFS (126 aa)) folds into the C2 domain.

As to quaternary structure, interacts via its C2 domain with PtdIns(3)P and, to a lesser extent, PtdIns(5)P in vitro. It depends on Ca(2+) as a cofactor. Highly expressed in postpuberal testis, where expression is sperm cell-specific. Also expressed in brain of both sexes.

The protein resides in the nucleus. It localises to the cytoplasm. It is found in the perinuclear region. The enzyme catalyses a 1,2-diacyl-sn-glycero-3-phospho-(1D-myo-inositol-4,5-bisphosphate) + H2O = 1D-myo-inositol 1,4,5-trisphosphate + a 1,2-diacyl-sn-glycerol + H(+). The production of the second messenger molecules diacylglycerol (DAG) and inositol 1,4,5-trisphosphate (IP3) is mediated by activated phosphatidylinositol-specific phospholipase C enzymes. In vitro, hydrolyzes PtdIns(4,5)P2 in a Ca(2+)-dependent manner. Triggers intracellular Ca(2+) oscillations in oocytes solely during M phase and is involved in inducing oocyte activation and initiating embryonic development up to the blastocyst stage. Is therefore a strong candidate for the egg-activating soluble sperm factor that is transferred from the sperm into the egg cytoplasm following gamete membrane fusion. May exert an inhibitory effect on phospholipase-C-coupled processes that depend on calcium ions and protein kinase C, including CFTR trafficking and function. This chain is 1-phosphatidylinositol 4,5-bisphosphate phosphodiesterase zeta-1, found in Mus musculus (Mouse).